Reading from the N-terminus, the 137-residue chain is Proofreading thioesterase EntH (137 aa).

The active-site Nucleophile or proton acceptor is Glu-63.

Belongs to the thioesterase PaaI family. In terms of assembly, homotetramer. Dimer of dimers. Interacts specifically with the aryl carrier protein (ArCP) domain of EntB.

The protein resides in the cytoplasm. It participates in siderophore biosynthesis; enterobactin biosynthesis. Required for optimal enterobactin synthesis. Acts as a proofreading enzyme that prevents EntB misacylation by hydrolyzing the thioester bound existing between EntB and wrongly charged molecules. The chain is Proofreading thioesterase EntH from Salmonella paratyphi A (strain AKU_12601).